The chain runs to 217 residues: Dephospho-CoA kinase (217 aa).

The DPCK domain maps to 2-217; it reads VIGLTGGIAS…RELARIEEQK (216 aa). 10–15 is an ATP binding site; sequence ASGKST.

Belongs to the CoaE family.

It is found in the cytoplasm. The enzyme catalyses 3'-dephospho-CoA + ATP = ADP + CoA + H(+). The protein operates within cofactor biosynthesis; coenzyme A biosynthesis; CoA from (R)-pantothenate: step 5/5. In terms of biological role, catalyzes the phosphorylation of the 3'-hydroxyl group of dephosphocoenzyme A to form coenzyme A. This is Dephospho-CoA kinase from Lactococcus lactis subsp. lactis (strain IL1403) (Streptococcus lactis).